Consider the following 177-residue polypeptide: Ubiquitin-conjugating enzyme E2 C (177 aa).

A disordered region spans residues 1–31; that stretch reads MSGQNIDPAANQVRQKERPRDMTTSKERHSV. Residues 14–30 show a composition bias toward basic and acidic residues; that stretch reads RQKERPRDMTTSKERHS. Residues 30-175 form the UBC core domain; sequence SVSKRLQQEL…LHEKYKTAQS (146 aa). Cys114 functions as the Glycyl thioester intermediate in the catalytic mechanism.

It belongs to the ubiquitin-conjugating enzyme family. As to quaternary structure, component of the APC/C complex. Post-translationally, autoubiquitinated by the APC/C complex, leading to its degradation by the proteasome.

It catalyses the reaction S-ubiquitinyl-[E1 ubiquitin-activating enzyme]-L-cysteine + [E2 ubiquitin-conjugating enzyme]-L-cysteine = [E1 ubiquitin-activating enzyme]-L-cysteine + S-ubiquitinyl-[E2 ubiquitin-conjugating enzyme]-L-cysteine.. The catalysed reaction is S-ubiquitinyl-[E1 ubiquitin-activating enzyme]-L-cysteine + [acceptor protein]-L-lysine = [E1 ubiquitin-activating enzyme]-L-cysteine + N(6)-monoubiquitinyl-[acceptor protein]-L-lysine.. The protein operates within protein modification; protein ubiquitination. In terms of biological role, catalyzes the covalent attachment of ubiquitin to other proteins. Acts as an essential factor of the anaphase promoting complex/cyclosome (APC/C), a cell cycle-regulated ubiquitin ligase that is essential for the transition from metaphase to anaphase in mitosis. Involved in both degradation of proteins responsible for maintaining sister chromatid cohesion at the onset of anaphase and of mitotic cyclins A and B at the exit of mitosis. Acts by initiating polyubiquitin chains on APC/C substrates, leading to the degradation of APC/C substrates by the proteasome and promoting mitotic exit. The chain is Ubiquitin-conjugating enzyme E2 C (UBE2C) from Spisula solidissima (Atlantic surf-clam).